The following is a 339-amino-acid chain: tRNA pseudouridine synthase B (339 aa).

Catalysis depends on D40, which acts as the Nucleophile. Positions 262–307 constitute an RPE1 insert domain; the sequence is FRRLSKFAYREEFEENTERSTAAYTLVREDANTGLTYKLPLEVELS.

Belongs to the pseudouridine synthase TruB family. Type 1 subfamily.

The enzyme catalyses uridine(55) in tRNA = pseudouridine(55) in tRNA. Functionally, responsible for synthesis of pseudouridine from uracil-55 in the psi GC loop of transfer RNAs. This Rickettsia felis (strain ATCC VR-1525 / URRWXCal2) (Rickettsia azadi) protein is tRNA pseudouridine synthase B.